The following is a 354-amino-acid chain: Probable N-acetylmuramoyl-L-alanine amidase (354 aa).

The N-terminal stretch at 1–39 (MVKVINNFVKVNQYDRPGLKLAAVKGIVMHWTATPGASA) is a signal peptide. The N-acetylmuramoyl-L-alanine amidase domain maps to 40 to 152 (LNERNYFNGT…YDVTNKGCPT (113 aa)).

It belongs to the N-acetylmuramoyl-L-alanine amidase 2 family.

The protein resides in the secreted. The catalysed reaction is Hydrolyzes the link between N-acetylmuramoyl residues and L-amino acid residues in certain cell-wall glycopeptides.. This chain is Probable N-acetylmuramoyl-L-alanine amidase, found in Bacillus licheniformis.